A 475-amino-acid polypeptide reads, in one-letter code: Ribulose bisphosphate carboxylase large chain (475 aa).

Residues methionine 1–serine 2 constitute a propeptide that is removed on maturation. Proline 3 bears the N-acetylproline mark. The residue at position 14 (lysine 14) is an N6,N6,N6-trimethyllysine. The substrate site is built by asparagine 123 and threonine 173. Residue lysine 175 is the Proton acceptor of the active site. Substrate is bound at residue lysine 177. Mg(2+)-binding residues include lysine 201, aspartate 203, and glutamate 204. An N6-carboxylysine modification is found at lysine 201. Histidine 294 acts as the Proton acceptor in catalysis. Arginine 295, histidine 327, and serine 379 together coordinate substrate.

The protein belongs to the RuBisCO large chain family. Type I subfamily. In terms of assembly, heterohexadecamer of 8 large chains and 8 small chains; disulfide-linked. The disulfide link is formed within the large subunit homodimers. It depends on Mg(2+) as a cofactor. Post-translationally, the disulfide bond which can form in the large chain dimeric partners within the hexadecamer appears to be associated with oxidative stress and protein turnover.

The protein resides in the plastid. It localises to the chloroplast. The catalysed reaction is 2 (2R)-3-phosphoglycerate + 2 H(+) = D-ribulose 1,5-bisphosphate + CO2 + H2O. It catalyses the reaction D-ribulose 1,5-bisphosphate + O2 = 2-phosphoglycolate + (2R)-3-phosphoglycerate + 2 H(+). Its function is as follows. RuBisCO catalyzes two reactions: the carboxylation of D-ribulose 1,5-bisphosphate, the primary event in carbon dioxide fixation, as well as the oxidative fragmentation of the pentose substrate in the photorespiration process. Both reactions occur simultaneously and in competition at the same active site. The polypeptide is Ribulose bisphosphate carboxylase large chain (Populus tremuloides (Quaking aspen)).